The sequence spans 186 residues: Thioredoxin M2, chloroplastic (186 aa).

A chloroplast-targeting transit peptide spans Met-1 to Val-72. The Thioredoxin domain maps to Cys-73–Pro-186. Residues Cys-110 and Cys-113 each act as nucleophile in the active site. A disulfide bridge connects residues Cys-110 and Cys-113.

Belongs to the thioredoxin family. Plant M-type subfamily. In terms of assembly, interacts with G6PD1 and G6PD4. Interacts with PGL3.

The protein localises to the plastid. It is found in the chloroplast stroma. In terms of biological role, thiol-disulfide oxidoreductase that may participate in various redox reactions. May activate NADP-malate dehydrogenase. The polypeptide is Thioredoxin M2, chloroplastic (Arabidopsis thaliana (Mouse-ear cress)).